A 517-amino-acid chain; its full sequence is Salicyloyl-CoA 5-hydroxylase (517 aa).

Belongs to the aromatic-ring hydroxylase family. KMO subfamily.

The catalysed reaction is 2-hydroxybenzoyl-CoA + NADH + O2 + H(+) = 2,5-dihydroxybenzoyl-CoA + NAD(+) + H2O. Its function is as follows. Involved in the degradation of salicylate via a pathway involving coenzyme A derivative. Catalyzes the aromatic hydroxylation of salicylyl-CoA to yield gentisyl-CoA. The protein is Salicyloyl-CoA 5-hydroxylase of Streptomyces sp.